The following is a 118-amino-acid chain: Small ribosomal subunit protein uS13 (118 aa).

The segment at 91–118 (HRRSLPVRGQRTKTNARTRKGPRKPIKA) is disordered.

It belongs to the universal ribosomal protein uS13 family. Part of the 30S ribosomal subunit. Forms a loose heterodimer with protein S19. Forms two bridges to the 50S subunit in the 70S ribosome.

Its function is as follows. Located at the top of the head of the 30S subunit, it contacts several helices of the 16S rRNA. In the 70S ribosome it contacts the 23S rRNA (bridge B1a) and protein L5 of the 50S subunit (bridge B1b), connecting the 2 subunits; these bridges are implicated in subunit movement. Contacts the tRNAs in the A and P-sites. The polypeptide is Small ribosomal subunit protein uS13 (Francisella philomiragia subsp. philomiragia (strain ATCC 25017 / CCUG 19701 / FSC 153 / O#319-036)).